Reading from the N-terminus, the 1205-residue chain is Solute carrier family 12 member 2 (1205 aa).

The residue at position 1 (Met-1) is an N-acetylmethionine. The segment covering 1–22 (MEPGPARPRLAPAARPGWGRAA) has biased composition (low complexity). Residues 1 to 102 (MEPGPARPRL…AAAAAAAAAA (102 aa)) form a disordered region. Topologically, residues 1 to 279 (MEPGPARPRL…AESKGVVKFG (279 aa)) are cytoplasmic. Residues 23-35 (GCRRRGGPARHGR) are compositionally biased toward basic residues. Ser-74 and Ser-76 each carry phosphoserine. An RFXV motif 1 motif is present at residues 77–80 (RFQV). The segment covering 87 to 102 (AGRAAAAAAAAAAAAA) has biased composition (low complexity). The RFXV motif 2 motif lies at 133–136 (RFRV). Residues 143–155 (ASSSADDSLSDAA) are compositionally biased toward low complexity. Residues 143-187 (ASSSADDSLSDAAGVGGDGPNVSFQNGGDTVLSEGSSLHSGGGSG) are disordered. Residues Thr-196, Thr-200, Thr-205, Thr-210, and Thr-223 each carry the phosphothreonine modification. Ser-235 is subject to Phosphoserine. Thr-259 is modified (phosphothreonine). The discontinuously helical transmembrane segment at 280 to 309 (WIKGVLVRCMLNIWGVMLFIRLSWIVGQAG) threads the bilayer. Residue Leu-290 coordinates Na(+). 2 residues coordinate K(+): Asn-291 and Ile-292. Trp-293 lines the Na(+) pocket. Residues Gly-294, Val-295, and Met-296 each coordinate chloride. Residues 310-329 (IGLSVVVIAMATVVTTITGL) form a helical membrane-spanning segment. At 330-360 (STSAIATNGFVRGGGAYYLISRSLGPEFGGA) the chain is on the cytoplasmic side. A helical membrane pass occupies residues 361-388 (IGLIFAFANAVAVAMYVVGFAETVVELL). Residue Phe-365 coordinates chloride. Tyr-376 serves as a coordination point for K(+). Residues 389–398 (KEHSILMIDE) lie on the Extracellular side of the membrane. Residues 399–422 (INDIRIIGAITVVILLGISVAGME) form a helical membrane-spanning segment. Over 423–425 (WEA) the chain is Cytoplasmic. A helical membrane pass occupies residues 426–447 (KAQIVLLVILLLAIADFVIGTF). Topologically, residues 448-479 (ISLESKKPKGFFGYKSEIFNENFGPDFREEET) are extracellular. A discontinuously helical membrane pass occupies residues 480–497 (FFSVFAIFFPAATGILAG). K(+) contacts are provided by Pro-489, Ala-490, and Thr-492. Chloride-binding residues include Pro-489 and Ala-490. Chloride-binding residues include Gly-493 and Ile-494. Residues 498–512 (ANISGDLADPQSAIP) are Cytoplasmic-facing. Residues 513–534 (KGTLLAILITTVVYIGIAVSVG) form a helical membrane-spanning segment. Residues 535–591 (SCVVRDATGNVNDTITTELTNCTSAACKLNFDFSYCESNTCSYGLMNNFQVMSMVSG) lie on the Extracellular side of the membrane. 2 N-linked (GlcNAc...) asparagine glycosylation sites follow: Asn-546 and Asn-555. 2 disulfide bridges follow: Cys-556/Cys-561 and Cys-570/Cys-575. Residues 592 to 616 (FAPLISAGIFSATLSSALASLVSAP) form a helical membrane-spanning segment. Positions 603, 606, and 607 each coordinate Na(+). Residues 617 to 644 (KIFQALCKDNIYPAFQMFAKGYGKNNEP) are Cytoplasmic-facing. Transmembrane regions (helical) follow at residues 645–665 (LRGY…AELN) and 666–684 (VIAP…LINF). Positions 675 and 679 each coordinate chloride. Residues 685 to 707 (SVFHASLAKSPGWRPAFKYYNMW) are Cytoplasmic-facing. Transmembrane regions (helical) follow at residues 708–725 (ISLI…VINW) and 726–738 (WAAL…VLGL). Over 739 to 1205 (YIYVTYKKPD…NHQSVLTFYS (467 aa)) the chain is Cytoplasmic. The tract at residues 754-771 (STQALTYLSALQHSIRLS) is scissor helix. A phosphoserine mark is found at Ser-933 and Ser-937. The interval 953-986 (SDQDTCKSSGEKSITQKDEEEDGKTPTQPLLKKE) is disordered. Ser-987 is modified (phosphoserine).

The protein belongs to the SLC12A transporter family. As to quaternary structure, homodimer; adopts a domain-swap conformation at the scissor helices connecting the transmembrane domain and C-terminal domain. Post-translationally, phosphorylated at Thr-196, Thr-200 and Thr-205 by OXSR1/OSR1 and STK39/SPAK downstream of WNK kinases (WNK1, WNK2, WNK3 or WNK4), promoting its activity. As to expression, widely expressed. High expression found in the cochlea, cochlear lateral wall, and the choroid plexus. Lower expression found in the cerebellum and the cortex.

The protein resides in the basolateral cell membrane. It catalyses the reaction K(+)(out) + 2 chloride(out) + Na(+)(out) = K(+)(in) + 2 chloride(in) + Na(+)(in). Its activity is regulated as follows. Activated following phosphorylation by OXSR1/OSR1 and STK39/SPAK downstream of WNK kinases (WNK1, WNK2, WNK3 or WNK4). Inhibited by bumetanide and furosemide. In terms of biological role, cation-chloride cotransporter which mediates the electroneutral transport of chloride, potassium and/or sodium ions across the membrane. Plays a vital role in the regulation of ionic balance and cell volume. This chain is Solute carrier family 12 member 2 (Slc12a2), found in Mus musculus (Mouse).